The primary structure comprises 369 residues: Mitogen-activated protein kinase 5 (369 aa).

Positions 36–322 (QPPIMPIGRG…VEEALDHPYL (287 aa)) constitute a Protein kinase domain. Residues 42–50 (IGRGAYGIV) and K65 each bind ATP. D162 acts as the Proton acceptor in catalysis. Phosphothreonine is present on T194. Positions 194–196 (TEY) match the TXY motif. Y196 is subject to Phosphotyrosine.

The protein belongs to the protein kinase superfamily. CMGC Ser/Thr protein kinase family. MAP kinase subfamily. In terms of assembly, interacts with MKK1. Dually phosphorylated on Thr-194 and Tyr-196, which activates the enzyme.

It carries out the reaction L-seryl-[protein] + ATP = O-phospho-L-seryl-[protein] + ADP + H(+). The enzyme catalyses L-threonyl-[protein] + ATP = O-phospho-L-threonyl-[protein] + ADP + H(+). Its activity is regulated as follows. Activated by threonine and tyrosine phosphorylation. Its function is as follows. Involved in disease resistance and abiotic stress tolerance signaling pathways. This Oryza sativa subsp. indica (Rice) protein is Mitogen-activated protein kinase 5 (MPK5).